The following is a 715-amino-acid chain: DNA ligase (715 aa).

NAD(+) is bound by residues 47 to 51, 96 to 97, and Glu129; these read DADYD and SL. Residue Lys131 is the N6-AMP-lysine intermediate of the active site. NAD(+) is bound by residues Arg152, Glu189, Lys306, and Lys330. Zn(2+) contacts are provided by Cys435, Cys438, Cys453, and Cys459. The region spanning 637-715 is the BRCT domain; that stretch reads KRDSAVAGKT…EDEWLALIQG (79 aa).

Belongs to the NAD-dependent DNA ligase family. LigA subfamily. Mg(2+) is required as a cofactor. It depends on Mn(2+) as a cofactor.

It catalyses the reaction NAD(+) + (deoxyribonucleotide)n-3'-hydroxyl + 5'-phospho-(deoxyribonucleotide)m = (deoxyribonucleotide)n+m + AMP + beta-nicotinamide D-nucleotide.. DNA ligase that catalyzes the formation of phosphodiester linkages between 5'-phosphoryl and 3'-hydroxyl groups in double-stranded DNA using NAD as a coenzyme and as the energy source for the reaction. It is essential for DNA replication and repair of damaged DNA. The sequence is that of DNA ligase from Rhodopseudomonas palustris (strain BisA53).